The chain runs to 174 residues: uncharacterized protein (174 aa).

A helical transmembrane segment spans residues 126 to 146 (AIDEFIITVIPVVLGSGIPLF).

To B.subtilis YyaP.

It is found in the membrane. This is an uncharacterized protein from Bacillus subtilis (strain 168).